We begin with the raw amino-acid sequence, 886 residues long: uncharacterized protein (886 aa).

The N-terminal stretch at 1 to 20 is a signal peptide; sequence MKIIKSLILLVLFMASPAKG. The next 5 membrane-spanning stretches (helical) occupy residues 520–540, 609–629, 647–667, 680–700, and 779–799; these read VTIF…VEVV, LLFI…IITI, VIAF…IILM, ISIL…FLLI, and LLFY…TIVV. The disordered stretch occupies residues 856-886; sequence EARKPQGGGEHTGKFFQNRNDVKPEQTERND. The segment covering 875 to 886 has biased composition (basic and acidic residues); the sequence is NDVKPEQTERND.

The protein belongs to the TrbL/VirB6 family.

It is found in the cell membrane. This is an uncharacterized protein from Rickettsia bellii (strain RML369-C).